The sequence spans 273 residues: DnaJ homolog subfamily C member 27 (273 aa).

GTP is bound by residues glycine 23–serine 30, aspartate 71–histidine 75, and asparagine 134–aspartate 137. The region spanning aspartate 217 to lysine 273 is the J domain.

This sequence belongs to the small GTPase superfamily. Rab family.

The protein resides in the nucleus. In terms of biological role, GTPase possibly involved in regulation of the MEK/ERK pathway. This is DnaJ homolog subfamily C member 27 (dnajc27) from Danio rerio (Zebrafish).